An 82-amino-acid chain; its full sequence is Turripeptide Gdm9.1 (82 aa).

Residues 1–23 (MMAKLMITVMMVLLLSLQQGADG) form the signal peptide. Positions 24–46 (RSERWRKNQMAASRIMRNLITAR) are excised as a propeptide. A 4-hydroxyproline mark is found at proline 49 and proline 50. Cystine bridges form between cysteine 53-cysteine 68, cysteine 58-cysteine 72, and cysteine 64-cysteine 79. 2 positions are modified to 4-carboxyglutamate: glutamate 60 and glutamate 63.

This sequence belongs to the Pg turripeptide superfamily. Expressed by the venom duct.

It is found in the secreted. In Gemmula diomedea (Gem-turris), this protein is Turripeptide Gdm9.1.